The sequence spans 98 residues: 10 kDa chaperonin (98 aa).

It belongs to the GroES chaperonin family. In terms of assembly, forms stable complexes with CPN60 in the presence of ATP.

The protein localises to the cytoplasm. Functionally, seems to function only as a co-chaperone, along with cpn60, and in certain cases is essential for the discharge of biologically active proteins from cpn60. This Brassica napus (Rape) protein is 10 kDa chaperonin.